The following is a 142-amino-acid chain: Large ribosomal subunit protein uL13 (142 aa).

It belongs to the universal ribosomal protein uL13 family. As to quaternary structure, part of the 50S ribosomal subunit.

Functionally, this protein is one of the early assembly proteins of the 50S ribosomal subunit, although it is not seen to bind rRNA by itself. It is important during the early stages of 50S assembly. This Vibrio vulnificus (strain CMCP6) protein is Large ribosomal subunit protein uL13.